Consider the following 492-residue polypeptide: Ribose import ATP-binding protein RbsA (492 aa).

2 ABC transporter domains span residues 3–239 (IDMR…VGRK) and 238–492 (RKLE…TGGK). 35–42 (GENGAGKS) is a binding site for ATP.

This sequence belongs to the ABC transporter superfamily. Ribose importer (TC 3.A.1.2.1) family. As to quaternary structure, the complex is composed of an ATP-binding protein (RbsA), two transmembrane proteins (RbsC) and a solute-binding protein (RbsB).

The protein localises to the cell membrane. The catalysed reaction is D-ribose(out) + ATP + H2O = D-ribose(in) + ADP + phosphate + H(+). In terms of biological role, part of the ABC transporter complex RbsABC involved in ribose import. Responsible for energy coupling to the transport system. The protein is Ribose import ATP-binding protein RbsA of Streptococcus agalactiae serotype Ia (strain ATCC 27591 / A909 / CDC SS700).